We begin with the raw amino-acid sequence, 234 residues long: MSTSARDRLIVGLDLPTVTEAEKIVSTLGEEVLFYKIGYQLAFAGGLDFARDLAASGKQVFLDMKLLDIDNTVAKGVENIVKMGVSMLTLHAYPKAMKSAVEAARGSNLCLLGVTVLTSMDEQDVIDAGYEYDPHSLVLRRAEQARAAGMGGIVCSAEEAAAVRKIIGGDMALVTPGIRPAGAEKGDQKRVMTPADALRAGSSHLVVGRPIVAAPDPLAASRAILAEMESALSR.

Substrate-binding positions include D14, K36, 63-72 (DMKLLDIDNT), T118, R179, Q188, G208, and R209. K65 functions as the Proton donor in the catalytic mechanism.

The protein belongs to the OMP decarboxylase family. Type 1 subfamily. Homodimer.

The enzyme catalyses orotidine 5'-phosphate + H(+) = UMP + CO2. Its pathway is pyrimidine metabolism; UMP biosynthesis via de novo pathway; UMP from orotate: step 2/2. Catalyzes the decarboxylation of orotidine 5'-monophosphate (OMP) to uridine 5'-monophosphate (UMP). The protein is Orotidine 5'-phosphate decarboxylase of Rhizobium meliloti (strain 1021) (Ensifer meliloti).